The primary structure comprises 312 residues: Transcriptional regulator protein Pur-beta (312 aa).

The disordered stretch occupies residues 1–32; it reads MADGDSGSERGGGGGPCGFQPASRGGGEQETQ. Residue Ala-2 is modified to N-acetylalanine. Ser-6 and Ser-8 each carry phosphoserine. Arg-24 carries the post-translational modification Omega-N-methylarginine. A DNA-binding region spans residues 28–254; it reads EQETQELASK…LRVSEVKPSY (227 aa). Phosphothreonine is present on Thr-31. Ser-101 carries the post-translational modification Phosphoserine. At Arg-152 the chain carries Omega-N-methylarginine. N6-acetyllysine is present on Lys-267. The span at 284–295 shows a compositional bias: basic and acidic residues; that stretch reads ERQRDKLYERRG. The tract at residues 284–312 is disordered; it reads ERQRDKLYERRGGGSGGGEESEGEEVDED. Arg-294 is subject to Omega-N-methylarginine. Residues Ser-298 and Ser-304 each carry the phosphoserine modification. The span at 302–312 shows a compositional bias: acidic residues; the sequence is EESEGEEVDED.

This sequence belongs to the PUR DNA-binding protein family. As to quaternary structure, homodimer, heterodimer with PURA and heterotrimer with PURA and YBX1/Y-box protein 1. Interacts with MYOCD and SRF. In terms of tissue distribution, expressed in myocardium of heart failure patients.

It localises to the nucleus. Functionally, transcriptional regulator which can act as an activator or a repressor. Represses the transcription of ACTA2 in fibroblasts and smooth muscle cells via its ability to interact with the purine-rich strand of a MCAT- containing element in the 5' flanking region of the gene. Represses the transcription of MYOCD, capable of repressing all isoforms of MYOCD but the magnitude of the repressive effects is most notable for the SMC- specific isoforms. Promotes hepatic glucose production by activating the transcription of ADCY6, leading to cAMP accumulation, increased PKA activity, CREB activation, and increased transcription of PCK1 and G6PC genes. Has capacity to bind repeated elements in single-stranded DNA such as the purine-rich single strand of the PUR element located upstream of the MYC gene. Participates in transcriptional and translational regulation of alpha-MHC expression in cardiac myocytes by binding to the purine-rich negative regulatory (PNR) element Modulates constitutive liver galectin-3 gene transcription by binding to its promoter. May play a role in the dendritic transport of a subset of mRNAs. The polypeptide is Transcriptional regulator protein Pur-beta (PURB) (Homo sapiens (Human)).